Here is a 313-residue protein sequence, read N- to C-terminus: Iron-sulfur protein required for NADH dehydrogenase, mitochondrial (313 aa).

A mitochondrion-targeting transit peptide spans 1–22 (MATVALLRSLRRRELHAAHISA). An ATP-binding site is contributed by 51 to 58 (GKGGVGKS).

This sequence belongs to the Mrp/NBP35 ATP-binding proteins family. [4Fe-4S] cluster is required as a cofactor.

The protein resides in the mitochondrion matrix. Functionally, essential during early vegetative growth. Required for the assembly of the mitochondrial membrane respiratory chain NADH dehydrogenase (Complex I). Involved in mitochondrial translation activity. May deliver of one or more Fe-S clusters to complex I subunits. The protein is Iron-sulfur protein required for NADH dehydrogenase, mitochondrial of Arabidopsis thaliana (Mouse-ear cress).